The chain runs to 683 residues: MSALNSLPLPVVRLLAFFHEELSERRPGRVPQTMQLWVGCLLVILISMTFEIPFVALSLAVLFYGIQSNAFYTKFVAILFVVATVLEIASLFLIYKWSYGEPLIRLIIAGPILMSCMFLMRTHRLGLVFFAVAIVAIYGQTFPAMLDYPEAVVRLTLWCIVVGLYPTLLMTLIGVLWFPSRAITQMHQALNDRLDDAISHLTDSLAPLPETRIEREALALQKLNVFCLADDANWRTQSAWWQSCVATVTYIYSTLNRYDPTSFADSQAIIEFRQKLASEINKLQHSITEGQCWQSDWRISESEAMTARECNLENICQTLLQLGQMDPNTPPTPAAKPPSMVADAFTNPDYMRYAVKTLLACLICYTFYSGVDWEGIHTCMLTCVIVANPNVGSSYQKMVLRFGGAFCGAILALLFTLLVMPWLDNIVELLFVLAPIFLLGAWIATSSERSSYIGTQMVVTFALATLENVFGPVYDLVEIRDRALGIIIGTVVSAVIYTFVWPESEARTLPQKLAGALGMLSKVMRIPRQQEVTALRTYLHIRIGLHAAFNACEEMCQRVVLERQLDSEERALLIERSQTVIRQGRDILHAWDATWNSAQALDNALQPDRAGQFADALEKYAAGVATALSHSPQITLEETSASQAILPTLLKQEQHVCQLFARLPDWTAPALTPATEQAQGATQ.

A run of 9 helical transmembrane segments spans residues 43-63, 75-95, 100-120, 125-145, 158-178, 402-422, 426-446, 457-477, and 483-503; these read VILI…AVLF, FVAI…FLIY, GEPL…MFLM, LGLV…FPAM, WCIV…VLWF, FGGA…VMPW, IVEL…IATS, MVVT…YDLV, and ALGI…VWPE.

The protein belongs to the MdtO family. As to quaternary structure, could be part of a tripartite efflux system composed of MdtN, MdtO and MdtP.

Its subcellular location is the cell inner membrane. In terms of biological role, could be involved in resistance to puromycin, acriflavine and tetraphenylarsonium chloride. This Escherichia coli O6:H1 (strain CFT073 / ATCC 700928 / UPEC) protein is Multidrug resistance protein MdtO (mdtO).